The sequence spans 188 residues: Dual specificity protein phosphatase 18 (188 aa).

The Tyrosine-protein phosphatase domain occupies 19–160 (GLSQITSSLY…LIHYEFQLFG (142 aa)). The interval 95–141 (MKQGRTLLHCAAGVSRSAALCLAYLMKYHAMSLLDAHTWTKSCRPII) is sufficient for mitochondrial localization. The active-site Phosphocysteine intermediate is cysteine 104.

Belongs to the protein-tyrosine phosphatase family. Non-receptor class dual specificity subfamily.

It is found in the cytoplasm. The protein resides in the nucleus. The protein localises to the mitochondrion inner membrane. The catalysed reaction is O-phospho-L-tyrosyl-[protein] + H2O = L-tyrosyl-[protein] + phosphate. It carries out the reaction O-phospho-L-seryl-[protein] + H2O = L-seryl-[protein] + phosphate. The enzyme catalyses O-phospho-L-threonyl-[protein] + H2O = L-threonyl-[protein] + phosphate. Can dephosphorylate single and diphosphorylated synthetic MAPK peptides, with preference for the phosphotyrosine and diphosphorylated forms over phosphothreonine. In vitro, dephosphorylates p-nitrophenyl phosphate (pNPP). The sequence is that of Dual specificity protein phosphatase 18 (DUSP18) from Bos taurus (Bovine).